The sequence spans 69 residues: Alpha-conotoxin Mr1.7a (69 aa).

Positions 1–21 (MGMRMMFTVFLLVVLATTVVS) are cleaved as a signal peptide. Positions 22–49 (FTSNRVLDPAFRRRNAAAKASDLIALNA) are excised as a propeptide. Proline 52 and proline 58 each carry 4-hydroxyproline; in Mr1.7b. Intrachain disulfides connect cysteine 54–cysteine 60 and cysteine 55–cysteine 68. The segment at 56–58 (THP) is lacks the Ser-Xaa-Pro motif that is crucial for potent interaction with nAChR. The residue at position 68 (cysteine 68) is a Cysteine amide.

Belongs to the conotoxin A superfamily. In terms of processing, two 4-hydroxyprolines have been detected by MS but the assignment of which of the three prolines is modified is uncertain. Expressed by the venom duct.

The protein resides in the secreted. Functionally, acts as a co-agonist with PNU (an alpha-7 nAChR-selective allosteric modulator) at the endogenous alpha-7/CHRNA7 nicotinic acetylcholine receptors (nAChR) when tested in human SH-SY5Y neuroblastoma cells. Is the third alpha-conotoxin that acts as an agonist (after alpha-conotoxin SrIA/SrIB). Also acts as an antagonist at human alpha-7 nAChRs heterologously expressed in Xenopus oocytes. Has possibly a distinct nAChR binding mode from other alpha-conotoxins, due to a different three residue motif (lacks the Ser-Xaa-Pro motif). In terms of biological role, acts as a weak partial agonist at alpha-7/CHRNA7 nicotinic acetylcholine receptors (nAChR) when tested in human SH-SY5Y neuroblastoma cells. Has possibly a distinct nAChR binding mode from other alpha-conotoxins, due to a different three residue motif (lacks the Ser-Xaa-Pro motif). The sequence is that of Alpha-conotoxin Mr1.7a from Conus marmoreus (Marble cone).